Consider the following 300-residue polypeptide: Transcription initiation factor IIB 1 (300 aa).

The TFIIB-type zinc-finger motif lies at 3–34 (GKRVCPVCGSTEFIYDPSRGEIVCKVCGYVIE). Cys7, Cys10, Cys26, and Cys29 together coordinate Zn(2+). Tandem repeats lie at residues 114-197 (SELD…ARHL) and 210-291 (DYVN…ELVE).

This sequence belongs to the TFIIB family.

Its function is as follows. Stabilizes TBP binding to an archaeal box-A promoter. Also responsible for recruiting RNA polymerase II to the pre-initiation complex (DNA-TBP-TFIIB). The sequence is that of Transcription initiation factor IIB 1 from Thermococcus kodakarensis (strain ATCC BAA-918 / JCM 12380 / KOD1) (Pyrococcus kodakaraensis (strain KOD1)).